Reading from the N-terminus, the 179-residue chain is Ribulose bisphosphate carboxylase small subunit, chloroplastic 1/4 (179 aa).

Residues 1-58 constitute a chloroplast transit peptide; sequence MAASSTMLSSVATAACAAPAQASMVAPFVGLKSTSAFPVTQKPATGLSTLPSNGGRVQ.

This sequence belongs to the RuBisCO small chain family. In terms of assembly, heterohexadecamer of 8 large and 8 small subunits.

Its subcellular location is the plastid. It localises to the chloroplast. Functionally, ruBisCO catalyzes two reactions: the carboxylation of D-ribulose 1,5-bisphosphate, the primary event in carbon dioxide fixation, as well as the oxidative fragmentation of the pentose substrate. Both reactions occur simultaneously and in competition at the same active site. Although the small subunit is not catalytic it is essential for maximal activity. This Fritillaria agrestis (Stinkbells) protein is Ribulose bisphosphate carboxylase small subunit, chloroplastic 1/4 (RBCS1).